Here is a 750-residue protein sequence, read N- to C-terminus: Photosystem I P700 chlorophyll a apoprotein A1 (750 aa).

8 consecutive transmembrane segments (helical) span residues 70 to 93 (VFSAHFGQLSIIFLWLSGMYFHGA), 156 to 179 (LYCTAIGALVFAALMLFAGWFHYH), 195 to 219 (LNHHLAGLLGLGSLSWAGHQVHVSL), 291 to 309 (IAHHHLAIAILFLIAGHMY), 346 to 369 (WHAQLSLNLAMLGSLTIVVAHHMY), 385 to 411 (LSLFTHHMWIGGFLIVGAAAHAAIFMV), 433 to 455 (AIISHLNWACIFLGFHSFGLYIH), and 531 to 549 (FLVHHIHAFTIHVTVLILL). Cys-573 and Cys-582 together coordinate [4Fe-4S] cluster. 2 helical membrane passes run 589–610 (HVFLGLFWMYNSISVVIFHFSW) and 664–686 (LSAYGLFFLGAHFVWAFSLMFLF). A chlorophyll a'-binding site is contributed by His-675. Positions 683 and 691 each coordinate chlorophyll a. Trp-692 provides a ligand contact to phylloquinone. The helical transmembrane segment at 724–744 (AVGVTHYLLGGIATTWAFFLA) threads the bilayer.

This sequence belongs to the PsaA/PsaB family. As to quaternary structure, the PsaA/B heterodimer binds the P700 chlorophyll special pair and subsequent electron acceptors. PSI consists of a core antenna complex that captures photons, and an electron transfer chain that converts photonic excitation into a charge separation. The eukaryotic PSI reaction center is composed of at least 11 subunits. Requires P700 is a chlorophyll a/chlorophyll a' dimer, A0 is one or more chlorophyll a, A1 is one or both phylloquinones and FX is a shared 4Fe-4S iron-sulfur center. as cofactor.

It localises to the plastid. The protein localises to the chloroplast thylakoid membrane. It catalyses the reaction reduced [plastocyanin] + hnu + oxidized [2Fe-2S]-[ferredoxin] = oxidized [plastocyanin] + reduced [2Fe-2S]-[ferredoxin]. PsaA and PsaB bind P700, the primary electron donor of photosystem I (PSI), as well as the electron acceptors A0, A1 and FX. PSI is a plastocyanin-ferredoxin oxidoreductase, converting photonic excitation into a charge separation, which transfers an electron from the donor P700 chlorophyll pair to the spectroscopically characterized acceptors A0, A1, FX, FA and FB in turn. Oxidized P700 is reduced on the lumenal side of the thylakoid membrane by plastocyanin. This chain is Photosystem I P700 chlorophyll a apoprotein A1, found in Jasminum nudiflorum (Winter jasmine).